The chain runs to 209 residues: Orotate phosphoribosyltransferase (209 aa).

5-phospho-alpha-D-ribose 1-diphosphate contacts are provided by residues arginine 96, lysine 100, histidine 102, and 122 to 130 (EDLISTGGS). Serine 126 provides a ligand contact to orotate.

This sequence belongs to the purine/pyrimidine phosphoribosyltransferase family. PyrE subfamily. Homodimer. The cofactor is Mg(2+).

The enzyme catalyses orotidine 5'-phosphate + diphosphate = orotate + 5-phospho-alpha-D-ribose 1-diphosphate. Its pathway is pyrimidine metabolism; UMP biosynthesis via de novo pathway; UMP from orotate: step 1/2. In terms of biological role, catalyzes the transfer of a ribosyl phosphate group from 5-phosphoribose 1-diphosphate to orotate, leading to the formation of orotidine monophosphate (OMP). The protein is Orotate phosphoribosyltransferase of Listeria monocytogenes serovar 1/2a (strain ATCC BAA-679 / EGD-e).